The chain runs to 107 residues: Iron-sulfur cluster assembly protein CyaY (107 aa).

It belongs to the frataxin family.

Involved in iron-sulfur (Fe-S) cluster assembly. May act as a regulator of Fe-S biogenesis. The chain is Iron-sulfur cluster assembly protein CyaY from Neisseria meningitidis serogroup A / serotype 4A (strain DSM 15465 / Z2491).